A 324-amino-acid polypeptide reads, in one-letter code: NADH-cytochrome b5 reductase 1 (324 aa).

The chain crosses the membrane as a helical span at residues 49-69 (LNIVLAFVVGLIGSVVVLLYF). One can recognise an FAD-binding FR-type domain in the interval 81–184 (TQWQQYRLME…KGPKGQMRYA (104 aa)). FAD-binding positions include 164 to 179 (GSMK…GPKG) and 190 to 222 (HIGM…QIDF).

This sequence belongs to the flavoprotein pyridine nucleotide cytochrome reductase family. Monomer. Component of the 2-(3-amino-3-carboxypropyl)histidine synthase complex composed of DPH1, DPH2, DPH3 and a NADH-dependent reductase, predominantly CBR1. The cofactor is FAD.

Its subcellular location is the mitochondrion outer membrane. The catalysed reaction is 2 Fe(III)-[cytochrome b5] + NADH = 2 Fe(II)-[cytochrome b5] + NAD(+) + H(+). It carries out the reaction 2 Fe(3+)-[Dph3] + NADH = 2 Fe(2+)-[Dph3] + NAD(+) + H(+). It functions in the pathway protein modification; peptidyl-diphthamide biosynthesis. In terms of biological role, NADH-dependent reductase for DPH3 and cytochrome b5. Required for the first step of diphthamide biosynthesis, a post-translational modification of histidine which occurs in elongation factor 2. DPH1 and DPH2 transfer a 3-amino-3-carboxypropyl (ACP) group from S-adenosyl-L-methionine (SAM) to a histidine residue, the reaction is assisted by a reduction system comprising DPH3 and a NADH-dependent reductase, predominantly CBR1. By reducing DPH3, also involved in the formation of the tRNA wobble base modification mcm5s 2U (5-methoxycarbonylmethyl-2-thiouridine), mediated by the elongator complex. The cytochrome b5/NADH cytochrome b5 reductase electron transfer system supports the catalytic activity of several sterol biosynthetic enzymes. This Mycosarcoma maydis (Corn smut fungus) protein is NADH-cytochrome b5 reductase 1 (CBR1).